The following is a 686-amino-acid chain: Kinesin light chain (686 aa).

Disordered stretches follow at residues 1–23 (MSGS…SQEQ) and 158–204 (KYDE…SVSA). Residues 20–160 (SQEQIITGTR…EYMNSIKKYD (141 aa)) are a coiled coil. 6 TPR repeats span residues 215–248 (LRTL…LEKT), 257–290 (ATML…REKT), 299–332 (AATL…REKV), 341–374 (AKQL…YEKK), 383–416 (AKTK…AHER), and 472–505 (TTTL…RRNA). 2 disordered regions span residues 520–558 (QDLS…YEKT) and 586–686 (GYVE…SGNF). Positions 675–686 (DNLSSRRQSGNF) are enriched in polar residues.

It belongs to the kinesin light chain family. As to quaternary structure, oligomeric complex composed of two heavy chains and two light chains. In terms of processing, phosphorylation may modulate the process of mechanochemical coupling.

The protein localises to the cytoplasm. It is found in the cytoskeleton. Kinesin is a microtubule-associated force-producing protein that may play a role in organelle transport. The light chain may function in coupling of cargo to the heavy chain or in the modulation of its ATPase activity. The polypeptide is Kinesin light chain (Strongylocentrotus purpuratus (Purple sea urchin)).